The chain runs to 84 residues: Large ribosomal subunit protein bL27 (84 aa).

Residues 1–21 form a disordered region; the sequence is MAHKKGAGSTKNGRDSKPKML.

Belongs to the bacterial ribosomal protein bL27 family.

The polypeptide is Large ribosomal subunit protein bL27 (Dehalococcoides mccartyi (strain ATCC BAA-2100 / JCM 16839 / KCTC 5957 / BAV1)).